The sequence spans 491 residues: Protein SET DOMAIN GROUP 40 (491 aa).

Residues 36–278 (HSLSVSDFPD…LGEQVLLCYG (243 aa)) enclose the SET domain.

The protein belongs to the class V-like SAM-binding methyltransferase superfamily.

The polypeptide is Protein SET DOMAIN GROUP 40 (SDG40) (Arabidopsis thaliana (Mouse-ear cress)).